Here is a 316-residue protein sequence, read N- to C-terminus: L-lactate dehydrogenase (316 aa).

Residues Met14, 14–150 (MIGG…IIGL), Ile15, Asp35, Tyr67, Gly81, Phe82, Val125, Asn127, and Leu150 each bind NAD(+). Arg95 serves as a coordination point for substrate. Residues Arg158 and His182 each coordinate substrate. His182 (proton acceptor) is an active-site residue.

It belongs to the LDH/MDH superfamily. LDH family. As to quaternary structure, homotetramer.

The enzyme catalyses (S)-lactate + NAD(+) = pyruvate + NADH + H(+). The protein operates within fermentation; pyruvate fermentation to lactate; (S)-lactate from pyruvate: step 1/1. The polypeptide is L-lactate dehydrogenase (Plasmodium falciparum (isolate CDC / Honduras)).